The sequence spans 349 residues: Dihydroorotase (349 aa).

2 residues coordinate Zn(2+): His-17 and His-19. Residues 19–21 and Asn-45 contribute to the substrate site; that span reads HLR. The Zn(2+) site is built by Lys-105, His-142, and His-180. At Lys-105 the chain carries N6-carboxylysine. His-142 serves as a coordination point for substrate. A substrate-binding site is contributed by Leu-225. Asp-253 serves as a coordination point for Zn(2+). Asp-253 is an active-site residue. His-257 and Ala-269 together coordinate substrate.

It belongs to the metallo-dependent hydrolases superfamily. DHOase family. Class II DHOase subfamily. As to quaternary structure, homodimer. Zn(2+) is required as a cofactor.

The enzyme catalyses (S)-dihydroorotate + H2O = N-carbamoyl-L-aspartate + H(+). It functions in the pathway pyrimidine metabolism; UMP biosynthesis via de novo pathway; (S)-dihydroorotate from bicarbonate: step 3/3. Functionally, catalyzes the reversible cyclization of carbamoyl aspartate to dihydroorotate. This Nitrosomonas europaea (strain ATCC 19718 / CIP 103999 / KCTC 2705 / NBRC 14298) protein is Dihydroorotase.